The following is a 570-amino-acid chain: DNA polymerase/3'-5' exonuclease PolX (570 aa).

A DNA polymerase type-X region spans residues 1–315 (MHKKDIIRLL…PLIPPEIRES (315 aa)). 3 residues coordinate a divalent metal cation: Asp193, Asp195, and Asp240. Positions 333–570 (QIKGDLHMHS…DVEAFLKRND (238 aa)) are 3'-5' exonuclease. Residues His339, His341, His371, Glu410, His437, His465, Asp526, and His528 each coordinate Mn(2+).

It in the N-terminal section; belongs to the DNA polymerase type-X family. The protein in the C-terminal section; belongs to the PHP family. In terms of assembly, monomer. The cofactor is Mn(2+). Mg(2+) serves as cofactor.

It carries out the reaction DNA(n) + a 2'-deoxyribonucleoside 5'-triphosphate = DNA(n+1) + diphosphate. It catalyses the reaction Exonucleolytic cleavage in the 3'- to 5'-direction to yield nucleoside 5'-phosphates.. Its activity is regulated as follows. The polymerization activity is inhibited in the presence of 2'-3'-dideoxynucleoside 5'-triphosphate (ddNTP). Strictly DNA-template-directed DNA polymerase, preferentially acting on DNA structures containing gaps from one to a few nucleotides and bearing a phosphate group at the 5' end of the downstream DNA. The fact that PolX is able to conduct filling of a single-nucleotide gap, allowing further sealing of the resulting nick by a DNA ligase, points to a putative role in base excision repair (BER) during the B.subtilis life cycle. Moreover, also possesses a 3'-5' exonuclease activity able to edit unpaired 3'-termini in a gapped DNA substrate and likely involved in resecting unannealed 3'-termini during DNA repair. The same PolX molecule could perform the subsequent gap-filling step. Does not display 5'-deoxyribose 5'-phosphate (dRP) lyase activity, as predicted by the lack of the lysine and tyrosine residues responsible for the dRP lyase activity in some other PolX members. The sequence is that of DNA polymerase/3'-5' exonuclease PolX (polX) from Bacillus subtilis (strain 168).